The primary structure comprises 601 residues: Membrane protein insertase YidC (601 aa).

A helical transmembrane segment spans residues 10–30 (ISISLVILVLFQVIASYVLPP). The interval 34-63 (APPHPATQTAQTQPVSGQPAPGVPAPSAVP) is disordered. A compositionally biased stretch (low complexity) spans 39-53 (ATQTAQTQPVSGQPA). A compositionally biased stretch (pro residues) spans 54 to 63 (PGVPAPSAVP). Helical transmembrane passes span 382-404 (FGNM…FPLV), 455-475 (LPML…FISI), 510-530 (ALSP…TMWG), and 549-569 (FMPV…VLYY).

It belongs to the OXA1/ALB3/YidC family. Type 1 subfamily. As to quaternary structure, interacts with the Sec translocase complex via SecD. Specifically interacts with transmembrane segments of nascent integral membrane proteins during membrane integration.

The protein localises to the cell inner membrane. Functionally, required for the insertion and/or proper folding and/or complex formation of integral membrane proteins into the membrane. Involved in integration of membrane proteins that insert both dependently and independently of the Sec translocase complex, as well as at least some lipoproteins. Aids folding of multispanning membrane proteins. The sequence is that of Membrane protein insertase YidC from Acidiphilium cryptum (strain JF-5).